The following is a 307-amino-acid chain: Putative F-box protein PP2-B6 (307 aa).

Residues 42–88 (HSPFDDLPEDCISNIISFTSPRDVCVSASVSKSFAHAVQCDSIWEKF) form the F-box domain.

The protein is Putative F-box protein PP2-B6 (PP2B6) of Arabidopsis thaliana (Mouse-ear cress).